The following is an 884-amino-acid chain: Valine--tRNA ligase (884 aa).

The 'HIGH' region signature appears at Pro47–His57. Residues Lys525–Ser529 carry the 'KMSKS' region motif. An ATP-binding site is contributed by Lys528. Residues Ala812–Lys884 are a coiled coil.

Belongs to the class-I aminoacyl-tRNA synthetase family. ValS type 1 subfamily. In terms of assembly, monomer.

The protein localises to the cytoplasm. It catalyses the reaction tRNA(Val) + L-valine + ATP = L-valyl-tRNA(Val) + AMP + diphosphate. Its function is as follows. Catalyzes the attachment of valine to tRNA(Val). As ValRS can inadvertently accommodate and process structurally similar amino acids such as threonine, to avoid such errors, it has a 'posttransfer' editing activity that hydrolyzes mischarged Thr-tRNA(Val) in a tRNA-dependent manner. The protein is Valine--tRNA ligase of Nitratidesulfovibrio vulgaris (strain ATCC 29579 / DSM 644 / CCUG 34227 / NCIMB 8303 / VKM B-1760 / Hildenborough) (Desulfovibrio vulgaris).